Consider the following 186-residue polypeptide: ATP synthase subunit delta (186 aa).

The protein belongs to the ATPase delta chain family. F-type ATPases have 2 components, F(1) - the catalytic core - and F(0) - the membrane proton channel. F(1) has five subunits: alpha(3), beta(3), gamma(1), delta(1), epsilon(1). F(0) has three main subunits: a(1), b(2) and c(10-14). The alpha and beta chains form an alternating ring which encloses part of the gamma chain. F(1) is attached to F(0) by a central stalk formed by the gamma and epsilon chains, while a peripheral stalk is formed by the delta and b chains.

It is found in the cell inner membrane. F(1)F(0) ATP synthase produces ATP from ADP in the presence of a proton or sodium gradient. F-type ATPases consist of two structural domains, F(1) containing the extramembraneous catalytic core and F(0) containing the membrane proton channel, linked together by a central stalk and a peripheral stalk. During catalysis, ATP synthesis in the catalytic domain of F(1) is coupled via a rotary mechanism of the central stalk subunits to proton translocation. In terms of biological role, this protein is part of the stalk that links CF(0) to CF(1). It either transmits conformational changes from CF(0) to CF(1) or is implicated in proton conduction. In Ruegeria pomeroyi (strain ATCC 700808 / DSM 15171 / DSS-3) (Silicibacter pomeroyi), this protein is ATP synthase subunit delta.